A 289-amino-acid polypeptide reads, in one-letter code: Alpha-soluble NSF attachment protein (289 aa).

A TPR repeat occupies 112–145; it reads GKYYKEIAELYELEQNFEQAIIYFEKAADIYQSE.

Belongs to the SNAP family.

It is found in the membrane. Its function is as follows. Required for vesicular transport between the endoplasmic reticulum and the Golgi apparatus. The sequence is that of Alpha-soluble NSF attachment protein from Vitis vinifera (Grape).